A 419-amino-acid polypeptide reads, in one-letter code: Carboxypeptidase A1 (419 aa).

A signal peptide spans 1–16 (MQGLLILSVLLGAALG). A propeptide spans 17–110 (KEDFVGHQVL…QEQMFASQSR (94 aa)) (activation peptide). Residues 121–414 (TYHTLDEIYD…LGVLTIMEHT (294 aa)) enclose the Peptidase M14 domain. The Zn(2+) site is built by H179 and E182. Substrate is bound by residues 179-182 (HSRE), R237, and 254-255 (NR). C248 and C271 are oxidised to a cystine. Position 306 (H306) interacts with Zn(2+). Substrate-binding positions include 307–308 (SY) and Y358. Residue E380 is the Proton donor/acceptor of the active site.

It belongs to the peptidase M14 family. In terms of assembly, monomer. May form a complex with proelastase 2. Zn(2+) is required as a cofactor. Pancreas.

Its subcellular location is the secreted. The enzyme catalyses Release of a C-terminal amino acid, but little or no action with -Asp, -Glu, -Arg, -Lys or -Pro.. It catalyses the reaction leukotriene C4 + H2O = leukotriene F4 + glycine. Its activity is regulated as follows. Inhibited by interaction with the S.magnifica carboxypeptidase inhibitor SmCI. Carboxypeptidase that catalyzes the release of a C-terminal amino acid, but has little or no action with -Asp, -Glu, -Arg, -Lys or -Pro. Catalyzes the conversion of leukotriene C4 to leukotriene F4 via the hydrolysis of an amide bond. The chain is Carboxypeptidase A1 (CPA1) from Bos taurus (Bovine).